The sequence spans 1072 residues: Integrator complex subunit 3 homolog (1072 aa).

2 disordered regions span residues 920-943 (YPSS…STPS) and 1002-1072 (DTTV…NDSD). Phosphoserine occurs at positions 1042, 1043, 1047, and 1048.

Belongs to the Integrator subunit 3 family. In terms of assembly, belongs to the multiprotein complex Integrator, at least composed of IntS1, IntS2, IntS3, IntS4, omd/IntS5, IntS6, defl/IntS7, IntS8, IntS9, IntS10, IntS11, IntS12, asun/IntS13, IntS14 and IntS15. The core complex associates with protein phosphatase 2A subunits mts/PP2A and Pp2A-29B, to form the Integrator-PP2A (INTAC) complex.

It localises to the nucleus. The protein resides in the cytoplasm. In terms of biological role, component of the integrator complex, a multiprotein complex that terminates RNA polymerase II (Pol II) transcription in the promoter-proximal region of genes. The integrator complex provides a quality checkpoint during transcription elongation by driving premature transcription termination of transcripts that are unfavorably configured for transcriptional elongation: the complex terminates transcription by (1) catalyzing dephosphorylation of the C-terminal domain (CTD) of Pol II subunit Polr2A/Rbp1 and Spt5, and (2) degrading the exiting nascent RNA transcript via endonuclease activity. The integrator complex is also involved in the 3'-end processing of the U7 snRNA, and also the spliceosomal snRNAs U1, U2, U4 and U5. The polypeptide is Integrator complex subunit 3 homolog (IntS3) (Drosophila yakuba (Fruit fly)).